A 1378-amino-acid polypeptide reads, in one-letter code: Attractin-like protein 1 (1378 aa).

Positions methionine 1–alanine 51 are cleaved as a signal peptide. The 39-residue stretch at leucine 52–glutamine 90 folds into the EGF-like 1 domain. The Extracellular segment spans residues leucine 52–leucine 1229. 3 disulfide bridges follow: cysteine 62/cysteine 78, cysteine 80/cysteine 89, and cysteine 92/cysteine 118. N-linked (GlcNAc...) asparagine glycosylation occurs at asparagine 75. The 117-residue stretch at cysteine 92–asparagine 208 folds into the CUB domain. Residues asparagine 173 and asparagine 197 are each glycosylated (N-linked (GlcNAc...) asparagine). An EGF-like 2 domain is found at serine 206–aspartate 244. 3 cysteine pairs are disulfide-bonded: cysteine 210–cysteine 220, cysteine 214–cysteine 232, and cysteine 234–cysteine 243. Kelch repeat units lie at residues phenylalanine 315 to glutamate 364, isoleucine 366 to serine 414, valine 426 to aspartate 474, serine 479 to glycine 530, methionine 532 to glycine 590, and serine 591 to asparagine 637. Residue asparagine 379 is glycosylated (N-linked (GlcNAc...) asparagine). PSI domains are found at residues asparagine 613 to proline 656, arginine 665 to histidine 708, and isoleucine 714 to leucine 759. Asparagine 703 carries an N-linked (GlcNAc...) asparagine glycan. In terms of domain architecture, C-type lectin spans valine 754–glutamate 872. An intrachain disulfide couples cysteine 775 to cysteine 871. Residues asparagine 777 and asparagine 897 are each glycosylated (N-linked (GlcNAc...) asparagine). 2 PSI domains span residues proline 888–serine 938 and asparagine 941–proline 1011. Intrachain disulfides connect cysteine 1013–cysteine 1021, cysteine 1015–cysteine 1027, cysteine 1030–cysteine 1039, cysteine 1042–cysteine 1056, cysteine 1059–cysteine 1068, cysteine 1061–cysteine 1075, cysteine 1077–cysteine 1087, and cysteine 1090–cysteine 1105. Laminin EGF-like domains are found at residues cysteine 1013–alanine 1058 and cysteine 1059–tyrosine 1107. Asparagine 1156 carries an N-linked (GlcNAc...) asparagine glycan. The helical transmembrane segment at valine 1230 to valine 1250 threads the bilayer. Residues tryptophan 1251–valine 1378 lie on the Cytoplasmic side of the membrane. An interaction with MC4R region spans residues valine 1287–cysteine 1324. Residues glutamine 1351–valine 1378 form a disordered region.

In terms of assembly, interacts with MC4R. In terms of tissue distribution, highly expressed in brain, heart, lung, kidney and liver. In the central nervous system, it is highly expressed in the dentate gyrus, CA1-3 regions of the hippocampus, and the ventral taenia tecta.

It is found in the cell membrane. Its function is as follows. May play a role in melanocortin signaling pathways that regulate energy homeostasis. In Mus musculus (Mouse), this protein is Attractin-like protein 1 (Atrnl1).